We begin with the raw amino-acid sequence, 123 residues long: UPF0738 protein Bcer98_0913 (123 aa).

It belongs to the UPF0738 family.

This is UPF0738 protein Bcer98_0913 from Bacillus cytotoxicus (strain DSM 22905 / CIP 110041 / 391-98 / NVH 391-98).